A 249-amino-acid chain; its full sequence is Probable septum site-determining protein MinC (249 aa).

Residues Lys115 to Ala141 form a disordered region. A compositionally biased stretch (low complexity) spans Gln118–Ala141.

It belongs to the MinC family. As to quaternary structure, interacts with MinD and FtsZ.

Cell division inhibitor that blocks the formation of polar Z ring septums. Rapidly oscillates between the poles of the cell to destabilize FtsZ filaments that have formed before they mature into polar Z rings. Prevents FtsZ polymerization. The polypeptide is Probable septum site-determining protein MinC (Marinobacter nauticus (strain ATCC 700491 / DSM 11845 / VT8) (Marinobacter aquaeolei)).